A 224-amino-acid chain; its full sequence is Ribosomal RNA small subunit methyltransferase G (224 aa).

S-adenosyl-L-methionine contacts are provided by residues glycine 89, leucine 94, 140–141 (IE), and arginine 154.

Belongs to the methyltransferase superfamily. RNA methyltransferase RsmG family.

It is found in the cytoplasm. The catalysed reaction is guanosine(527) in 16S rRNA + S-adenosyl-L-methionine = N(7)-methylguanosine(527) in 16S rRNA + S-adenosyl-L-homocysteine. Functionally, specifically methylates the N7 position of guanine in position 527 of 16S rRNA. This chain is Ribosomal RNA small subunit methyltransferase G, found in Bordetella avium (strain 197N).